Reading from the N-terminus, the 217-residue chain is ATP phosphoribosyltransferase (217 aa).

Belongs to the ATP phosphoribosyltransferase family. Short subfamily. As to quaternary structure, heteromultimer composed of HisG and HisZ subunits.

The protein localises to the cytoplasm. The enzyme catalyses 1-(5-phospho-beta-D-ribosyl)-ATP + diphosphate = 5-phospho-alpha-D-ribose 1-diphosphate + ATP. It participates in amino-acid biosynthesis; L-histidine biosynthesis; L-histidine from 5-phospho-alpha-D-ribose 1-diphosphate: step 1/9. In terms of biological role, catalyzes the condensation of ATP and 5-phosphoribose 1-diphosphate to form N'-(5'-phosphoribosyl)-ATP (PR-ATP). Has a crucial role in the pathway because the rate of histidine biosynthesis seems to be controlled primarily by regulation of HisG enzymatic activity. This is ATP phosphoribosyltransferase from Burkholderia lata (strain ATCC 17760 / DSM 23089 / LMG 22485 / NCIMB 9086 / R18194 / 383).